The following is a 147-amino-acid chain: Methylmalonyl-CoA mutase homolog (147 aa).

It to methylmalonyl-CoA mutase.

This chain is Methylmalonyl-CoA mutase homolog, found in Alkalihalophilus pseudofirmus (strain ATCC BAA-2126 / JCM 17055 / OF4) (Bacillus pseudofirmus).